A 498-amino-acid polypeptide reads, in one-letter code: Thiamine transporter 1 (498 aa).

The residue at position 1 (Met1) is an N-acetylmethionine. Residues 1 to 28 lie on the Cytoplasmic side of the membrane; it reads MDVPARVSRRAAAAAARMLLRTARVPRE. The chain crosses the membrane as a helical span at residues 29-46; sequence CWFLPTALLCAYGFFANL. The Extracellular segment spans residues 47 to 71; it reads RPSEPFLTPYLLGPDKNLTERQVYN. A glycan (N-linked (GlcNAc...) asparagine) is linked at Asn63. Residues 72 to 92 form a helical membrane-spanning segment; it reads EIYPVWTYSYLLLLFPVFLAT. The Cytoplasmic segment spans residues 93–105; sequence DYLRYKPVILLQG. The helical transmembrane segment at 106–126 threads the bilayer; it reads LSLIVTWFMLLYAQGLLAIQF. Residues 127-128 lie on the Extracellular side of the membrane; it reads LE. Residues 129-149 form a helical membrane-spanning segment; the sequence is FFYGIATATEIAYYSYIYTVV. Residues 150 to 164 lie on the Cytoplasmic side of the membrane; it reads DLGMYQKVTSYCRSA. The helical transmembrane segment at 165-185 threads the bilayer; that stretch reads TLVGFTVGSVLGQILVSVVGW. Position 186 (Ser186) is a topological domain, extracellular. The chain crosses the membrane as a helical span at residues 187-207; it reads LFSLNVISLTCVSVAFAVAWF. The Cytoplasmic segment spans residues 208-295; sequence LPMPQKSLFF…DFLMCYSSRP (88 aa). Ser222 carries the phosphoserine modification. Residues 296–316 traverse the membrane as a helical segment; it reads LLCWSVWWALSTCGYFQVVNY. At 317 to 334 the chain is on the extracellular side; the sequence is AQGLWEKVMPSQNADIYN. The helical transmembrane segment at 335–355 threads the bilayer; sequence GGVEAVSTLLGASAVFAVGYI. Topologically, residues 356-360 are cytoplasmic; sequence KLSWS. The helical transmembrane segment at 361 to 381 threads the bilayer; the sequence is TWGEMTLFLCSLLIAAAVYVM. The Extracellular segment spans residues 382-386; it reads DTVQS. A helical transmembrane segment spans residues 387 to 407; it reads IWVCYASYVVFRIIYMVLITI. Topologically, residues 408–423 are cytoplasmic; the sequence is ATFQIAANLSMERYAL. A helical membrane pass occupies residues 424 to 444; it reads VFGVNTFIALALQTLLTLIVV. The Extracellular portion of the chain corresponds to 445–456; it reads DARGLGLCITTQ. The helical transmembrane segment at 457-477 threads the bilayer; it reads FLIYASYFAAISVVFLANGIV. The Cytoplasmic portion of the chain corresponds to 478–498; sequence SIIKKCRKQEDPSSSPQASTS.

It belongs to the reduced folate carrier (RFC) transporter (TC 2.A.48) family. In terms of assembly, interacts with TSPAN1; this interaction increases the stability of SLC19A2. Interacts with TMEM63B. As to expression, expressed in liver. Expressed in cochlear hair cells and duodenum (at protein level). Detected in pancreatic acinar cells (at protein level). Also expressed strongly in pancreatic islet cells. Expressed in the testis. Very highly expressed in liver, and also detected at lower levels in heart, testis, kidney, brain and spleen. In terms of tissue distribution, expressed at low levels in liver and spleen.

The protein localises to the cell membrane. The enzyme catalyses thiamine(out) + H(+)(in) = thiamine(in) + H(+)(out). The catalysed reaction is pyridoxine(out) + n H(+)(out) = pyridoxine(in) + n H(+)(in). In terms of biological role, high-affinity transporter for the intake of thiamine. Essential for spermatogenesis. Mediates H(+)-dependent pyridoxine transport. This chain is Thiamine transporter 1, found in Mus musculus (Mouse).